Reading from the N-terminus, the 358-residue chain is MVPAELFARVEFPDHKILAQTKDFHDSLTKPPGSLGKLEQIGCFISACQGQIPPRPLNNSKIVVFAGDHGVATKGVSAYPSSVSLQMAENITNGGAAINVIARTTGTSVRLIDTSLDHEAWGDERVSRSCGSIDVEDAMTQEQVERALKIGKRIADQEVDAGADILIPGDLGIGNTTTAAALVGTFTLAEPVVVVGRGTGIDDEAWKLKVSAIRDAMFRARDLRQDPIAIARKISSPDLAAMAAFIAQAAVRRTPVLLDGVVVTAAALLANKLAPGARRWFIAGHRSTEPAHSVALNALALDPILELGMSLGEGSGAATALPLVKIAVDLMNDMSTFSSAGVDGPLNASSEAPEQNTE.

Glu313 acts as the Proton acceptor in catalysis.

The protein belongs to the CobT family.

It carries out the reaction 5,6-dimethylbenzimidazole + nicotinate beta-D-ribonucleotide = alpha-ribazole 5'-phosphate + nicotinate + H(+). The protein operates within nucleoside biosynthesis; alpha-ribazole biosynthesis; alpha-ribazole from 5,6-dimethylbenzimidazole: step 1/2. Its function is as follows. Catalyzes the synthesis of alpha-ribazole-5'-phosphate from nicotinate mononucleotide (NAMN) and 5,6-dimethylbenzimidazole (DMB). This is Nicotinate-nucleotide--dimethylbenzimidazole phosphoribosyltransferase from Corynebacterium glutamicum (strain ATCC 13032 / DSM 20300 / JCM 1318 / BCRC 11384 / CCUG 27702 / LMG 3730 / NBRC 12168 / NCIMB 10025 / NRRL B-2784 / 534).